A 322-amino-acid polypeptide reads, in one-letter code: MAALTSGLGVLGYLLFPLLLASPTWVTSVSRRHPKSQANSLSGDVACGQPVLQGKLLGGEFARDRKWPWQVSLHYSGFHICGGSILSAYWVLSAAHCFDRGKKLETYDIYVGITNLEKANRHTQWFEIYQVIIHPTFQMYHPIGGDVALVQLKSAIVFSDFVLPICLPPSDLYLINLSCWTTGWGMISPQGETGNELLEAQLPLIPRFQCQLLYGLSSYLLPEMLCAADIKTMKNVCEGDSGSPLVCKQNQTWLQIGIVSWGRGCAQPLYPGVFANVSYFLSWIRYHLQIIPNPPQILPSLSSSPKNTLIIFVTIMGHLLVL.

A signal peptide spans 1–28; it reads MAALTSGLGVLGYLLFPLLLASPTWVTS. Residues 29-55 constitute a propeptide, activation peptide; that stretch reads VSRRHPKSQANSLSGDVACGQPVLQGK. Residues 56 to 289 form the Peptidase S1 domain; that stretch reads LLGGEFARDR…FLSWIRYHLQ (234 aa). C81 and C97 are disulfide-bonded. Active-site charge relay system residues include H96 and D146. N176 carries an N-linked (GlcNAc...) asparagine glycan. Cystine bridges form between C179/C247, C210/C226, and C237/C265. S241 serves as the catalytic Charge relay system. N-linked (GlcNAc...) asparagine glycans are attached at residues N250 and N276.

Belongs to the peptidase S1 family.

Its subcellular location is the secreted. The polypeptide is Serine protease 38 (Prss38) (Mus musculus (Mouse)).